The sequence spans 60 residues: Adenylate kinase isoenzyme 1 (60 aa).

9–14 (GSGKGT) serves as a coordination point for ATP. A Phosphoserine modification is found at S25. An NMP region spans residues 25–53 (STGDLLRVDSSNGFLIDGYPRQGEEFERK). Residues T26 and R31 each contribute to the AMP site.

Belongs to the adenylate kinase family. AK1 subfamily. In terms of assembly, monomer. The cofactor is Mg(2+).

Its subcellular location is the cytoplasm. The enzyme catalyses a ribonucleoside 5'-phosphate + ATP = a ribonucleoside 5'-diphosphate + ADP. The catalysed reaction is AMP + ATP = 2 ADP. It catalyses the reaction dAMP + ATP = dADP + ADP. It carries out the reaction dATP + AMP = dADP + ADP. The enzyme catalyses dAMP + dATP = 2 dADP. The catalysed reaction is a 2'-deoxyribonucleoside 5'-diphosphate + ATP = a 2'-deoxyribonucleoside 5'-triphosphate + ADP. It catalyses the reaction a ribonucleoside 5'-diphosphate + ATP = a ribonucleoside 5'-triphosphate + ADP. It carries out the reaction CDP + GTP = CTP + GDP. The enzyme catalyses GDP + ATP = GTP + ADP. The catalysed reaction is UDP + ATP = UTP + ADP. It catalyses the reaction GTP + UDP = UTP + GDP. It carries out the reaction dTDP + GTP = dTTP + GDP. The enzyme catalyses dCDP + GTP = dCTP + GDP. The catalysed reaction is dGDP + ATP = dGTP + ADP. It catalyses the reaction dADP + GTP = dATP + GDP. It carries out the reaction thiamine diphosphate + ADP = thiamine triphosphate + AMP. Its function is as follows. Catalyzes the reversible transfer of the terminal phosphate group between ATP and AMP. Also displays broad nucleoside diphosphate kinase activity. Plays an important role in cellular energy homeostasis and in adenine nucleotide metabolism. Also catalyzes at a very low rate the synthesis of thiamine triphosphate (ThTP) from thiamine diphosphate (ThDP) and ADP. This is Adenylate kinase isoenzyme 1 (Ak1) from Mesocricetus auratus (Golden hamster).